Here is a 412-residue protein sequence, read N- to C-terminus: Putative competence-damage inducible protein (412 aa).

This sequence belongs to the CinA family.

The polypeptide is Putative competence-damage inducible protein (Bacillus cereus (strain G9842)).